Reading from the N-terminus, the 386-residue chain is Galactokinase (386 aa).

32-35 (EHTD) provides a ligand contact to substrate. ATP-binding positions include Ser66 and 123–129 (GASLSSS). Mg(2+)-binding residues include Ser129 and Glu161. Asp173 functions as the Proton acceptor in the catalytic mechanism. A substrate-binding site is contributed by Tyr223.

It belongs to the GHMP kinase family. GalK subfamily.

It localises to the cytoplasm. It catalyses the reaction alpha-D-galactose + ATP = alpha-D-galactose 1-phosphate + ADP + H(+). The protein operates within carbohydrate metabolism; galactose metabolism. Functionally, catalyzes the transfer of the gamma-phosphate of ATP to D-galactose to form alpha-D-galactose-1-phosphate (Gal-1-P). The protein is Galactokinase of Staphylococcus saprophyticus subsp. saprophyticus (strain ATCC 15305 / DSM 20229 / NCIMB 8711 / NCTC 7292 / S-41).